Consider the following 252-residue polypeptide: Thiazole synthase (252 aa).

Lys98 acts as the Schiff-base intermediate with DXP in catalysis. 1-deoxy-D-xylulose 5-phosphate contacts are provided by residues Gly159, 185 to 186 (AG), and 207 to 208 (AS).

The protein belongs to the ThiG family. In terms of assembly, homotetramer. Forms heterodimers with either ThiH or ThiS.

The protein resides in the cytoplasm. It carries out the reaction [ThiS sulfur-carrier protein]-C-terminal-Gly-aminoethanethioate + 2-iminoacetate + 1-deoxy-D-xylulose 5-phosphate = [ThiS sulfur-carrier protein]-C-terminal Gly-Gly + 2-[(2R,5Z)-2-carboxy-4-methylthiazol-5(2H)-ylidene]ethyl phosphate + 2 H2O + H(+). It participates in cofactor biosynthesis; thiamine diphosphate biosynthesis. Functionally, catalyzes the rearrangement of 1-deoxy-D-xylulose 5-phosphate (DXP) to produce the thiazole phosphate moiety of thiamine. Sulfur is provided by the thiocarboxylate moiety of the carrier protein ThiS. In vitro, sulfur can be provided by H(2)S. This is Thiazole synthase from Mycobacterium tuberculosis (strain ATCC 25177 / H37Ra).